Here is a 27-residue protein sequence, read N- to C-terminus: Metalloproteinase inhibitor 1 (27 aa).

Positions 1 to 12 (IEPERQEEEEEE) are enriched in acidic residues. Residues 1–27 (IEPERQEEEEEETRQRVRRGQVRQQQQ) are disordered.

In terms of biological role, metalloproteinase inhibitor, active on a globulinase from L.albus seeds, thermolysin and gelatinase B. The chain is Metalloproteinase inhibitor 1 from Lupinus albus (White lupine).